A 368-amino-acid chain; its full sequence is DNA replication and repair protein RecF (368 aa).

Residue 30 to 37 (GKNGSGKT) coordinates ATP.

It belongs to the RecF family.

It localises to the cytoplasm. In terms of biological role, the RecF protein is involved in DNA metabolism; it is required for DNA replication and normal SOS inducibility. RecF binds preferentially to single-stranded, linear DNA. It also seems to bind ATP. The polypeptide is DNA replication and repair protein RecF (Marinomonas sp. (strain MWYL1)).